Here is a 69-residue protein sequence, read N- to C-terminus: Cytochrome b-c1 complex subunit 6-1, mitochondrial (69 aa).

2 disulfide bridges follow: Cys17–Cys59 and Cys31–Cys45.

Belongs to the UQCRH/QCR6 family. Component of the ubiquinol-cytochrome c oxidoreductase (cytochrome b-c1 complex, complex III, CIII), a multisubunit enzyme composed of 10 subunits. The complex is composed of 3 respiratory subunits cytochrome b (MT-CYB), cytochrome c1 (CYC1-1 or CYC1-2) and Rieske protein (UCR1-1 or UCR1-2), 2 core protein subunits MPPalpha1 (or MPPalpha2) and MPPB, and 5 low-molecular weight protein subunits QCR7-1 (or QCR7-2), UCRQ-1 (or UCRQ-2), QCR9, UCRY and probably QCR6-1 (or QCR6-2). The complex exists as an obligatory dimer and forms supercomplexes (SCs) in the inner mitochondrial membrane with NADH-ubiquinone oxidoreductase (complex I, CI), resulting in different assemblies (supercomplexes SCI(1)III(2) and SCI(2)III(4)).

The protein localises to the mitochondrion inner membrane. Functionally, component of the ubiquinol-cytochrome c oxidoreductase, a multisubunit transmembrane complex that is part of the mitochondrial electron transport chain which drives oxidative phosphorylation. The respiratory chain contains 3 multisubunit complexes succinate dehydrogenase (complex II, CII), ubiquinol-cytochrome c oxidoreductase (cytochrome b-c1 complex, complex III, CIII) and cytochrome c oxidase (complex IV, CIV), that cooperate to transfer electrons derived from NADH and succinate to molecular oxygen, creating an electrochemical gradient over the inner membrane that drives transmembrane transport and the ATP synthase. The cytochrome b-c1 complex catalyzes electron transfer from ubiquinol to cytochrome c, linking this redox reaction to translocation of protons across the mitochondrial inner membrane, with protons being carried across the membrane as hydrogens on the quinol. In the process called Q cycle, 2 protons are consumed from the matrix, 4 protons are released into the intermembrane space and 2 electrons are passed to cytochrome c. This chain is Cytochrome b-c1 complex subunit 6-1, mitochondrial (QCR6-1), found in Arabidopsis thaliana (Mouse-ear cress).